We begin with the raw amino-acid sequence, 330 residues long: MIHVYYDKDANLGLLEEKMIAVLGYGSQGHAQAQNLKDSGLNVIVGLRKGSSSWKKAESDGFRVFKTSEAVKRADIIQVLIPDEVQSRVYKEDIEPYLEEGNALVFSHGFNIHFGQIVPPDNVDIFMVAPKSPGHLVRRMYLEGKGVPGLLAVEQDYSGKAKELGLAYAKGIGCTKAGVIETTFKEETETDLFGEQAVLCGGVTSLVKAGFEVLVEAGYQPEIAYFECLNELKLIVDLMFEGGLTKMRHSISDTAQYGDLMVGPRIVNDNVKDEMRSVLKEIQSGEFAKKWILENKANRPVFNALTSKDENHLIEKVGKKLRDMMPWINE.

The 181-residue stretch at 2 to 182 folds into the KARI N-terminal Rossmann domain; that stretch reads IHVYYDKDAN…GCTKAGVIET (181 aa). Residues 25-28, Arg-48, Ser-51, Ser-53, and 83-86 contribute to the NADP(+) site; these read YGSQ and DEVQ. The active site involves His-108. Residue Gly-134 participates in NADP(+) binding. A KARI C-terminal knotted domain is found at 183–328; the sequence is TFKEETETDL…KKLRDMMPWI (146 aa). 4 residues coordinate Mg(2+): Asp-191, Glu-195, Glu-227, and Glu-231. Ser-252 contacts substrate.

This sequence belongs to the ketol-acid reductoisomerase family. Mg(2+) is required as a cofactor.

It catalyses the reaction (2R)-2,3-dihydroxy-3-methylbutanoate + NADP(+) = (2S)-2-acetolactate + NADPH + H(+). The enzyme catalyses (2R,3R)-2,3-dihydroxy-3-methylpentanoate + NADP(+) = (S)-2-ethyl-2-hydroxy-3-oxobutanoate + NADPH + H(+). It functions in the pathway amino-acid biosynthesis; L-isoleucine biosynthesis; L-isoleucine from 2-oxobutanoate: step 2/4. Its pathway is amino-acid biosynthesis; L-valine biosynthesis; L-valine from pyruvate: step 2/4. Its function is as follows. Involved in the biosynthesis of branched-chain amino acids (BCAA). Catalyzes an alkyl-migration followed by a ketol-acid reduction of (S)-2-acetolactate (S2AL) to yield (R)-2,3-dihydroxy-isovalerate. In the isomerase reaction, S2AL is rearranged via a Mg-dependent methyl migration to produce 3-hydroxy-3-methyl-2-ketobutyrate (HMKB). In the reductase reaction, this 2-ketoacid undergoes a metal-dependent reduction by NADPH to yield (R)-2,3-dihydroxy-isovalerate. This chain is Ketol-acid reductoisomerase (NADP(+)), found in Halothermothrix orenii (strain H 168 / OCM 544 / DSM 9562).